Consider the following 175-residue polypeptide: Putative carbonic anhydrase-like protein YbcF (175 aa).

It belongs to the beta-class carbonic anhydrase family.

The polypeptide is Putative carbonic anhydrase-like protein YbcF (ybcF) (Bacillus subtilis (strain 168)).